A 157-amino-acid chain; its full sequence is Polyferredoxin protein VhcB (157 aa).

4Fe-4S ferredoxin-type domains lie at 23–52 (NGISWDREKCEYCGPCAIKCPNDAIMVVNP), 62–92 (KTERANEFKMCDLCGTCVSACPTEALQMGKI), and 100–129 (DRIEFTPSLCDSCGACVEICPQNVLKLNEE). The [4Fe-4S] cluster site is built by C32, C35, C38, C42, C72, C75, C78, C82, C109, C112, C115, C119, C136, C139, C142, and C146.

Requires [4Fe-4S] cluster as cofactor.

The sequence is that of Polyferredoxin protein VhcB (vhcB) from Methanococcus voltae.